A 385-amino-acid chain; its full sequence is Podocin (385 aa).

Positions 1-27 (MDSRARSSSREAHGRSSRSSSRDDKKA) are enriched in basic and acidic residues. The tract at residues 1–64 (MDSRARSSSR…GEPRAPAATA (64 aa)) is disordered. The Cytoplasmic segment spans residues 1–104 (MDSRARSSSR…IKPSGLGACE (104 aa)). Cys103 carries S-palmitoyl cysteine lipidation. The helical transmembrane segment at 105–125 (WLLVLASLIFIIMTFPFSIWF) threads the bilayer. Residues 126–385 (CIKVVQEYER…NPKKKDSPML (260 aa)) are Extracellular-facing. Residues 357-370 (NRAQGSINYPSSSK) show a composition bias toward polar residues. Positions 357 to 385 (NRAQGSINYPSSSKPVEPLNPKKKDSPML) are disordered. Positions 376-385 (NPKKKDSPML) are enriched in basic and acidic residues.

It belongs to the band 7/mec-2 family. As to quaternary structure, interacts with nephrin/NPHS1, KIRRL1 and CD2AP. Interacts with DDN.

Its subcellular location is the membrane. Functionally, plays a role in the regulation of glomerular permeability, acting probably as a linker between the plasma membrane and the cytoskeleton. In Mus musculus (Mouse), this protein is Podocin (Nphs2).